The primary structure comprises 649 residues: DNA mismatch repair protein MutL (649 aa).

The interval 339-414 (KKKTKDESVQ…VREEESWQST (76 aa)) is disordered. The segment covering 342 to 360 (TKDESVQEQFHFEHTKPKE) has biased composition (basic and acidic residues). The segment covering 388-402 (PQLWQQPKQEWQPPQ) has biased composition (low complexity).

Belongs to the DNA mismatch repair MutL/HexB family.

In terms of biological role, this protein is involved in the repair of mismatches in DNA. It is required for dam-dependent methyl-directed DNA mismatch repair. May act as a 'molecular matchmaker', a protein that promotes the formation of a stable complex between two or more DNA-binding proteins in an ATP-dependent manner without itself being part of a final effector complex. The polypeptide is DNA mismatch repair protein MutL (Bacillus cytotoxicus (strain DSM 22905 / CIP 110041 / 391-98 / NVH 391-98)).